The primary structure comprises 343 residues: UDP-3-O-acylglucosamine N-acyltransferase (343 aa).

The active-site Proton acceptor is His-237.

Belongs to the transferase hexapeptide repeat family. LpxD subfamily. As to quaternary structure, homotrimer.

The catalysed reaction is a UDP-3-O-[(3R)-3-hydroxyacyl]-alpha-D-glucosamine + a (3R)-hydroxyacyl-[ACP] = a UDP-2-N,3-O-bis[(3R)-3-hydroxyacyl]-alpha-D-glucosamine + holo-[ACP] + H(+). Its pathway is bacterial outer membrane biogenesis; LPS lipid A biosynthesis. In terms of biological role, catalyzes the N-acylation of UDP-3-O-acylglucosamine using 3-hydroxyacyl-ACP as the acyl donor. Is involved in the biosynthesis of lipid A, a phosphorylated glycolipid that anchors the lipopolysaccharide to the outer membrane of the cell. The protein is UDP-3-O-acylglucosamine N-acyltransferase of Synechococcus sp. (strain JA-3-3Ab) (Cyanobacteria bacterium Yellowstone A-Prime).